A 919-amino-acid polypeptide reads, in one-letter code: MFS-type transporter clz9 (919 aa).

Positions 1–11 (MAASTKPTTKL) are enriched in polar residues. A disordered region spans residues 1–33 (MAASTKPTTKLSTEEDDVSRRDSESSADFMKSN). The chain crosses the membrane as a helical span at residues 69-89 (VVASFAAAISPFSTSTYYPVV). The N-linked (GlcNAc...) asparagine glycan is linked to Asn-104. The next 3 helical transmembrane spans lie at 132–152 (PMFL…ALQN), 192–212 (LIYA…IGGL), and 222–242 (VFWF…IFFG). Asn-260 carries N-linked (GlcNAc...) asparagine glycosylation. Transmembrane regions (helical) follow at residues 303-323 (FILS…TSVL), 333-353 (YDAV…LLAY), 393-413 (LGFV…YGWQ), and 418-438 (APLA…TGVM). Asn-461 carries an N-linked (GlcNAc...) asparagine glycan. The chain crosses the membrane as a helical span at residues 465-485 (LLLGAGAVAVVGPLNKSAGIG). The region spanning 641–809 (REWVTLIQGI…FTSANICSSF (169 aa)) is the DDE-1 domain. The tract at residues 840–897 (EAPWEAKTPSNRKKKQIQKRGTLTKGEGEDTLAQKEADQQIEREQRQGGEQSGRSRQA) is disordered. A compositionally biased stretch (basic and acidic residues) spans 865–886 (GEGEDTLAQKEADQQIEREQRQ). Low complexity predominate over residues 887-896 (GGEQSGRSRQ). The N-linked (GlcNAc...) asparagine glycan is linked to Asn-915.

The protein belongs to the major facilitator superfamily. CAR1 family.

It is found in the membrane. Its function is as follows. MFS-type transporter; part of the gene cluster that mediates the biosynthesis of squalestatin S1 (SQS1, also known as zaragozic acid A), a heavily oxidized fungal polyketide that offers potent cholesterol lowering activity by targeting squalene synthase (SS). The chain is MFS-type transporter clz9 from Cochliobolus lunatus (Filamentous fungus).